Here is a 433-residue protein sequence, read N- to C-terminus: Gamma-glutamyl phosphate reductase (433 aa).

The protein belongs to the gamma-glutamyl phosphate reductase family.

Its subcellular location is the cytoplasm. The enzyme catalyses L-glutamate 5-semialdehyde + phosphate + NADP(+) = L-glutamyl 5-phosphate + NADPH + H(+). It functions in the pathway amino-acid biosynthesis; L-proline biosynthesis; L-glutamate 5-semialdehyde from L-glutamate: step 2/2. Functionally, catalyzes the NADPH-dependent reduction of L-glutamate 5-phosphate into L-glutamate 5-semialdehyde and phosphate. The product spontaneously undergoes cyclization to form 1-pyrroline-5-carboxylate. The sequence is that of Gamma-glutamyl phosphate reductase from Rhodopseudomonas palustris (strain BisB18).